Reading from the N-terminus, the 132-residue chain is U10-hexatoxin-Hi1a (132 aa).

The first 20 residues, 1 to 20 (MKGFIVFSLSLCLVFTVCLA), serve as a signal peptide directing secretion. Residues 21-30 (EDELMKEAVR) constitute a propeptide that is removed on maturation.

Post-translationally, contains 5 disulfide bonds. As to expression, expressed by the venom gland.

It localises to the secreted. In terms of biological role, probable ion channel inhibitor. The protein is U10-hexatoxin-Hi1a of Hadronyche infensa (Fraser island funnel-web spider).